Reading from the N-terminus, the 303-residue chain is UDP-3-O-acyl-N-acetylglucosamine deacetylase (303 aa).

Residues H78, H237, and D241 each contribute to the Zn(2+) site. H264 acts as the Proton donor in catalysis.

Belongs to the LpxC family. Requires Zn(2+) as cofactor.

The catalysed reaction is a UDP-3-O-[(3R)-3-hydroxyacyl]-N-acetyl-alpha-D-glucosamine + H2O = a UDP-3-O-[(3R)-3-hydroxyacyl]-alpha-D-glucosamine + acetate. It functions in the pathway glycolipid biosynthesis; lipid IV(A) biosynthesis; lipid IV(A) from (3R)-3-hydroxytetradecanoyl-[acyl-carrier-protein] and UDP-N-acetyl-alpha-D-glucosamine: step 2/6. Its function is as follows. Catalyzes the hydrolysis of UDP-3-O-myristoyl-N-acetylglucosamine to form UDP-3-O-myristoylglucosamine and acetate, the committed step in lipid A biosynthesis. The sequence is that of UDP-3-O-acyl-N-acetylglucosamine deacetylase from Pseudomonas paraeruginosa (strain DSM 24068 / PA7) (Pseudomonas aeruginosa (strain PA7)).